The following is a 271-amino-acid chain: Glutamate racemase (271 aa).

Residues 13–14 (DS) and 45–46 (YG) contribute to the substrate site. Residue cysteine 77 is the Proton donor/acceptor of the active site. Substrate is bound at residue 78-79 (NT). The active-site Proton donor/acceptor is the cysteine 192. 193 to 194 (TH) provides a ligand contact to substrate.

The protein belongs to the aspartate/glutamate racemases family.

It catalyses the reaction L-glutamate = D-glutamate. It participates in cell wall biogenesis; peptidoglycan biosynthesis. Functionally, provides the (R)-glutamate required for cell wall biosynthesis. This Sinorhizobium medicae (strain WSM419) (Ensifer medicae) protein is Glutamate racemase.